The sequence spans 316 residues: tRNA dimethylallyltransferase (316 aa).

17 to 24 (GPTASGKT) serves as a coordination point for ATP. Residue 19–24 (TASGKT) coordinates substrate. 4 interaction with substrate tRNA regions span residues 42 to 45 (DSVL), 166 to 170 (QRLSR), 247 to 252 (RCVGYR), and 280 to 287 (KRQITWLR).

It belongs to the IPP transferase family. Monomer. Requires Mg(2+) as cofactor.

The enzyme catalyses adenosine(37) in tRNA + dimethylallyl diphosphate = N(6)-dimethylallyladenosine(37) in tRNA + diphosphate. Its function is as follows. Catalyzes the transfer of a dimethylallyl group onto the adenine at position 37 in tRNAs that read codons beginning with uridine, leading to the formation of N6-(dimethylallyl)adenosine (i(6)A). This Shigella flexneri protein is tRNA dimethylallyltransferase.